We begin with the raw amino-acid sequence, 148 residues long: Ribonuclease P protein component (148 aa).

Residues 119 to 148 (PLPAAPGTMPPARAPRPSSLSPTEPDPRSD) form a disordered region.

It belongs to the RnpA family. As to quaternary structure, consists of a catalytic RNA component (M1 or rnpB) and a protein subunit.

It catalyses the reaction Endonucleolytic cleavage of RNA, removing 5'-extranucleotides from tRNA precursor.. Functionally, RNaseP catalyzes the removal of the 5'-leader sequence from pre-tRNA to produce the mature 5'-terminus. It can also cleave other RNA substrates such as 4.5S RNA. The protein component plays an auxiliary but essential role in vivo by binding to the 5'-leader sequence and broadening the substrate specificity of the ribozyme. This is Ribonuclease P protein component from Xanthomonas campestris pv. campestris (strain 8004).